The chain runs to 716 residues: Polyribonucleotide nucleotidyltransferase (716 aa).

Mg(2+)-binding residues include aspartate 490 and aspartate 496. A KH domain is found at 556–615; sequence PKIETLTIPTDKIREVIGSGGKVIREIVETSGAKVDINDDGVIKIASNDQAAIKKAYDMI. An S1 motif domain is found at 625 to 693; it reads GQIYTGKVVK…ERGKVRLGMK (69 aa). Residues 695-716 are disordered; it reads VDQETGQEIQPEKKEKEEAGEA. Residues 704-716 show a composition bias toward basic and acidic residues; that stretch reads QPEKKEKEEAGEA.

This sequence belongs to the polyribonucleotide nucleotidyltransferase family. Mg(2+) serves as cofactor.

It is found in the cytoplasm. The enzyme catalyses RNA(n+1) + phosphate = RNA(n) + a ribonucleoside 5'-diphosphate. In terms of biological role, involved in mRNA degradation. Catalyzes the phosphorolysis of single-stranded polyribonucleotides processively in the 3'- to 5'-direction. The sequence is that of Polyribonucleotide nucleotidyltransferase from Cereibacter sphaeroides (strain ATCC 17029 / ATH 2.4.9) (Rhodobacter sphaeroides).